Consider the following 1690-residue polypeptide: Restin homolog (1690 aa).

Composition is skewed to polar residues over residues 1–11 and 39–51; these read MSDDTSASGGT and NIPT…TGIP. The interval 1–105 is disordered; sequence MSDDTSASGG…ESDDNLSSIN (105 aa). Phosphoserine is present on residues Ser-64 and Ser-67. The region spanning 143-185 is the CAP-Gly 1 domain; that stretch reads GDTHFAAGEWAGVVLDEPNGKNDGCVSGKRYFQCEPKRGIFSR. The interval 195–227 is disordered; it reads AGAQTPTSPLAKSSPDRSRTVSPTASIRSSMLR. A compositionally biased stretch (polar residues) spans 214-226; it reads TVSPTASIRSSML. The residue at position 216 (Ser-216) is a Phosphoserine. The CAP-Gly 2 domain maps to 260–302; the sequence is GETQFAPGNWCGVELDEPSGKNDGTVDDIRYFECKPKYGVFVP. Phosphoserine occurs at positions 309, 322, and 325. Thr-327 is subject to Phosphothreonine. Phosphoserine is present on Ser-328. Thr-362 is subject to Phosphothreonine. Coiled coils occupy residues 378–468, 484–660, 667–916, 926–981, 1001–1121, 1158–1549, and 1565–1600; these read QHVE…VSAT, GALQ…DMLR, EEKS…TKLK, LSSC…ELQA, ATGH…EAIQ, EADM…AQMN, and DIET…LETL. Positions 843–905 are disordered; it reads QQAAASGEEG…GSLEEEAKKS (63 aa). Residues 865–885 are compositionally biased toward polar residues; that stretch reads QLKSQAEETQSELKSTQSNLE. Disordered regions lie at residues 1031–1052 and 1400–1419; these read QLQD…KEKS and KLDE…NEIQ. 2 stretches are compositionally biased toward basic and acidic residues: residues 1040–1052 and 1410–1419; these read TKLK…KEKS and SQKKSHNEIQ. The disordered stretch occupies residues 1635–1665; sequence TEDCPIQGSEDQDYSTPSSESNNNEKERKLP. Residue Thr-1681 is modified to Phosphothreonine. Residue Ser-1682 is modified to Phosphoserine.

In terms of assembly, interacts with Lva. In terms of tissue distribution, specifically expressed at the tip of the furrow in cellularizing blastoderms. CLIP-190 and jar are coexpressed at several times in development and in a number of tissues, including embryonic axonal neuron processes and posterior pole.

It is found in the cytoplasm. The protein localises to the cytoskeleton. Its subcellular location is the golgi apparatus. The protein resides in the microtubule organizing center. It localises to the perinuclear region. Its function is as follows. Together CLIP-190 and jar may coordinate the interaction between the actin and microtubule cytoskeleton. May link endocytic vesicles to microtubules. May play a role in formation of furrows during cellularization. The sequence is that of Restin homolog (CLIP-190) from Drosophila melanogaster (Fruit fly).